The following is a 368-amino-acid chain: Aspartate-semialdehyde dehydrogenase (368 aa).

Residues 10–13, 37–38, and glutamine 72 each bind NADP(+); these read RGMV and TS. Arginine 101 contributes to the phosphate binding site. Cysteine 134 functions as the Acyl-thioester intermediate in the catalytic mechanism. Residues 160 to 161 and proline 191 contribute to the NADP(+) site; that span reads SG. Glutamate 239 lines the substrate pocket. Lysine 242 is a binding site for phosphate. Arginine 266 contacts substrate. Histidine 273 functions as the Proton acceptor in the catalytic mechanism. Glutamine 349 provides a ligand contact to NADP(+).

This sequence belongs to the aspartate-semialdehyde dehydrogenase family. As to quaternary structure, homodimer.

It carries out the reaction L-aspartate 4-semialdehyde + phosphate + NADP(+) = 4-phospho-L-aspartate + NADPH + H(+). It participates in amino-acid biosynthesis; L-lysine biosynthesis via DAP pathway; (S)-tetrahydrodipicolinate from L-aspartate: step 2/4. Its pathway is amino-acid biosynthesis; L-methionine biosynthesis via de novo pathway; L-homoserine from L-aspartate: step 2/3. The protein operates within amino-acid biosynthesis; L-threonine biosynthesis; L-threonine from L-aspartate: step 2/5. In terms of biological role, catalyzes the NADPH-dependent formation of L-aspartate-semialdehyde (L-ASA) by the reductive dephosphorylation of L-aspartyl-4-phosphate. The polypeptide is Aspartate-semialdehyde dehydrogenase (Azotobacter vinelandii).